Reading from the N-terminus, the 181-residue chain is Translation initiation factor IF-3 (181 aa).

It belongs to the IF-3 family. As to quaternary structure, monomer.

The protein localises to the cytoplasm. IF-3 binds to the 30S ribosomal subunit and shifts the equilibrium between 70S ribosomes and their 50S and 30S subunits in favor of the free subunits, thus enhancing the availability of 30S subunits on which protein synthesis initiation begins. This chain is Translation initiation factor IF-3, found in Cereibacter sphaeroides (strain ATCC 17023 / DSM 158 / JCM 6121 / CCUG 31486 / LMG 2827 / NBRC 12203 / NCIMB 8253 / ATH 2.4.1.) (Rhodobacter sphaeroides).